We begin with the raw amino-acid sequence, 288 residues long: Ankyrin repeat and SOCS box protein 8 (288 aa).

A Phosphoserine modification is found at Ser-17. ANK repeat units lie at residues 52 to 81, 85 to 113, 117 to 146, and 150 to 179; these read GTLK…EVNA, YNRT…NPNA, NRDT…SVNA, and NNDT…EVRV. Residues 235–288 enclose the SOCS box domain; sequence QLCEKLTVLCSAPGTLKTLARYAVRRSLGLQYLPDAVKGLPLPVSLKDYLLLLE.

This sequence belongs to the ankyrin SOCS box (ASB) family. Interacts with TBK1; this interaction promotes TBK1 proteasomal degradation. Post-translationally, phosphorylated by TBK1.

The protein localises to the cytoplasm. It participates in protein modification; protein ubiquitination. In terms of biological role, may be a substrate-recognition component of a SCF-like ECS (Elongin-Cullin-SOCS-box protein) E3 ubiquitin-protein ligase complex which mediates the ubiquitination and subsequent proteasomal degradation of target proteins. Inhibits IFN-beta production through the IRF3 signaling pathway by targeting TBK1 via 'Lys-48'-linked ubiquitination, leading to its proteasomal degradation. The chain is Ankyrin repeat and SOCS box protein 8 (Asb8) from Mus musculus (Mouse).